Consider the following 303-residue polypeptide: N-acetyl-D-glucosamine kinase (303 aa).

Residues 4-11 (GFDIGGTK) and 133-140 (GVGGGLIF) contribute to the ATP site. Positions 157, 177, 179, and 184 each coordinate Zn(2+).

It belongs to the ROK (NagC/XylR) family. NagK subfamily.

It carries out the reaction N-acetyl-D-glucosamine + ATP = N-acetyl-D-glucosamine 6-phosphate + ADP + H(+). It functions in the pathway cell wall biogenesis; peptidoglycan recycling. Its function is as follows. Catalyzes the phosphorylation of N-acetyl-D-glucosamine (GlcNAc) derived from cell-wall degradation, yielding GlcNAc-6-P. The chain is N-acetyl-D-glucosamine kinase from Escherichia coli O127:H6 (strain E2348/69 / EPEC).